The following is a 334-amino-acid chain: Mediator of RNA polymerase II transcription subunit 4 (334 aa).

Positions 76–100 (LIRTLKAHVEKRDEVIQQVENNLKA) form a coiled coil. Positions 188–203 (SSAQKPIIASPSASSS) are enriched in low complexity. Disordered stretches follow at residues 188–234 (SSAQ…GYGA) and 252–334 (EKQW…GRNK). 2 stretches are compositionally biased toward polar residues: residues 204–225 (NGGT…TNGD) and 264–282 (ATSS…SSPS).

It belongs to the Mediator complex subunit 4 family. In terms of assembly, component of the Mediator complex.

The protein resides in the nucleus. Its function is as follows. Component of the Mediator complex, a coactivator involved in the regulated transcription of nearly all RNA polymerase II-dependent genes. Mediator functions as a bridge to convey information from gene-specific regulatory proteins to the basal RNA polymerase II transcription machinery. Mediator is recruited to promoters by direct interactions with regulatory proteins and serves as a scaffold for the assembly of a functional preinitiation complex with RNA polymerase II and the general transcription factors. This chain is Mediator of RNA polymerase II transcription subunit 4 (mdt-4), found in Caenorhabditis briggsae.